A 318-amino-acid chain; its full sequence is Small ribosomal subunit biogenesis GTPase RsgA (318 aa).

The segment covering 1 to 16 (MTRGKPGRAGHDRRHA) has biased composition (basic residues). The segment at 1–21 (MTRGKPGRAGHDRRHASTGEH) is disordered. The region spanning 84 to 249 (SDQFKSKQLA…LIDSPGFQEF (166 aa)) is the CP-type G domain. Residues 133-136 (NKID) and 187-195 (GQSGMGKSS) each bind GTP. Cys-273, Cys-278, His-280, and Cys-286 together coordinate Zn(2+).

This sequence belongs to the TRAFAC class YlqF/YawG GTPase family. RsgA subfamily. Monomer. Associates with 30S ribosomal subunit, binds 16S rRNA. Requires Zn(2+) as cofactor.

It is found in the cytoplasm. In terms of biological role, one of several proteins that assist in the late maturation steps of the functional core of the 30S ribosomal subunit. Helps release RbfA from mature subunits. May play a role in the assembly of ribosomal proteins into the subunit. Circularly permuted GTPase that catalyzes slow GTP hydrolysis, GTPase activity is stimulated by the 30S ribosomal subunit. The chain is Small ribosomal subunit biogenesis GTPase RsgA from Ralstonia nicotianae (strain ATCC BAA-1114 / GMI1000) (Ralstonia solanacearum).